A 681-amino-acid chain; its full sequence is Heat shock 70 kDa protein (681 aa).

Residues 655–665 (NFPGGMPGAGM) show a composition bias toward gly residues. A disordered region spans residues 655-681 (NFPGGMPGAGMPGNAPAGSGPTVEEVD). Residues 666-675 (PGNAPAGSGP) show a composition bias toward low complexity.

It belongs to the heat shock protein 70 family.

In Plasmodium falciparum, this protein is Heat shock 70 kDa protein.